The primary structure comprises 200 residues: Glycerol-3-phosphate acyltransferase (200 aa).

A run of 5 helical transmembrane segments spans residues 1–21 (MLLS…MPNG), 53–73 (GPAL…VLLA), 81–101 (WVQV…VWLG), 114–134 (MFLG…MAVI), and 139–159 (IVSL…LTSG).

This sequence belongs to the PlsY family. In terms of assembly, probably interacts with PlsX.

The protein resides in the cell inner membrane. The enzyme catalyses an acyl phosphate + sn-glycerol 3-phosphate = a 1-acyl-sn-glycero-3-phosphate + phosphate. It participates in lipid metabolism; phospholipid metabolism. Its function is as follows. Catalyzes the transfer of an acyl group from acyl-phosphate (acyl-PO(4)) to glycerol-3-phosphate (G3P) to form lysophosphatidic acid (LPA). This enzyme utilizes acyl-phosphate as fatty acyl donor, but not acyl-CoA or acyl-ACP. In Synechococcus sp. (strain CC9902), this protein is Glycerol-3-phosphate acyltransferase.